The sequence spans 473 residues: Photosystem II CP43 reaction center protein (473 aa).

Positions 1 to 14 (MKILYSLRRFYHVE) are excised as a propeptide. The residue at position 15 (threonine 15) is an N-acetylthreonine. At threonine 15 the chain carries Phosphothreonine. 5 helical membrane passes run 69 to 93 (LFEV…PHLA), 134 to 155 (LLGP…KDRN), 178 to 200 (KALY…RKIT), 255 to 275 (KPFA…LSYS), and 291 to 312 (WFNN…ASQA). Position 367 (glutamate 367) interacts with [CaMn4O5] cluster. Residues 447–471 (RARAAAAGFEKGIDRDLEPVLFMTP) traverse the membrane as a helical segment.

It belongs to the PsbB/PsbC family. PsbC subfamily. PSII is composed of 1 copy each of membrane proteins PsbA, PsbB, PsbC, PsbD, PsbE, PsbF, PsbH, PsbI, PsbJ, PsbK, PsbL, PsbM, PsbT, PsbX, PsbY, PsbZ, Psb30/Ycf12, at least 3 peripheral proteins of the oxygen-evolving complex and a large number of cofactors. It forms dimeric complexes. It depends on Binds multiple chlorophylls and provides some of the ligands for the Ca-4Mn-5O cluster of the oxygen-evolving complex. It may also provide a ligand for a Cl- that is required for oxygen evolution. PSII binds additional chlorophylls, carotenoids and specific lipids. as a cofactor.

The protein resides in the plastid. The protein localises to the chloroplast thylakoid membrane. One of the components of the core complex of photosystem II (PSII). It binds chlorophyll and helps catalyze the primary light-induced photochemical processes of PSII. PSII is a light-driven water:plastoquinone oxidoreductase, using light energy to abstract electrons from H(2)O, generating O(2) and a proton gradient subsequently used for ATP formation. In Lemna minor (Common duckweed), this protein is Photosystem II CP43 reaction center protein.